The primary structure comprises 271 residues: MEKSPLKIGILNVMHDKADTKTRLQHVLTHTAIPVDLHFYYPMTHYAGRTVPEAVSSILDPLDIHEVATMDGFIITGSPIETLEFDQVHYIAEVRTLLKTLSQHVPNQLYLCWGGMVALNYFFGISKLILPHKLFGVYPQTILEPHPLLKGLKNDFKSPHARYAEMDVRGIHADPRLTINATTTKGKLFMVTEPTDTQTFVFSHIEYDRWGLDSEYKREVAAHPEIDYVRAKHYYHHKNDYDHPKFNWKKTQRTIFDNWIQHVADHRNDNH.

Cysteine 112 serves as the catalytic Acyl-thioester intermediate. Residue histidine 204 is the Proton acceptor of the active site. The active site involves glutamate 206.

The protein belongs to the MetA family.

The catalysed reaction is L-serine + acetyl-CoA = O-acetyl-L-serine + CoA. Its pathway is amino-acid biosynthesis; L-cysteine biosynthesis; L-cysteine from L-serine: step 1/2. Catalyzes the formation of O-acetylserine (OAS) from L-serine and acetyl-CoA. To a lesser extent, is also able to use succinyl-CoA and propionyl-CoA as acyl donors, but not butyryl-CoA. Does not acylate D-serine and L-homoserine. The protein is Serine O-acetyltransferase of Lacticaseibacillus casei (Lactobacillus casei).